The primary structure comprises 226 residues: Lipoprotein-releasing system ATP-binding protein LolD (226 aa).

Positions 6-226 (VLISGLTKTF…KLYKGNLEEV (221 aa)) constitute an ABC transporter domain. 42–49 (GESGSGKS) lines the ATP pocket.

It belongs to the ABC transporter superfamily. Lipoprotein translocase (TC 3.A.1.125) family. As to quaternary structure, the complex is composed of two ATP-binding proteins (LolD) and two transmembrane proteins (LolC and LolE).

The protein resides in the cell inner membrane. Functionally, part of the ABC transporter complex LolCDE involved in the translocation of mature outer membrane-directed lipoproteins, from the inner membrane to the periplasmic chaperone, LolA. Responsible for the formation of the LolA-lipoprotein complex in an ATP-dependent manner. This Treponema denticola (strain ATCC 35405 / DSM 14222 / CIP 103919 / JCM 8153 / KCTC 15104) protein is Lipoprotein-releasing system ATP-binding protein LolD.